Here is a 255-residue protein sequence, read N- to C-terminus: Tablysin 15 (255 aa).

The N-terminal stretch at 1-23 (MTSIPVSSFLLAALVLQYATSDA) is a signal peptide. 3 disulfides stabilise this stretch: Cys-27–Cys-40, Cys-31–Cys-117, and Cys-49–Cys-110. The Cell attachment site signature appears at 32-34 (RGD). The 145-residue stretch at 67 to 211 (LSKINDVRDH…KARALLTCNF (145 aa)) folds into the SCP domain. Residues Trp-82, His-153, and Lys-156 each coordinate leukotriene E4. Disulfide bonds link Cys-192/Cys-209 and Cys-232/Cys-243.

The protein belongs to the CRISP family. Expressed in salivary glands.

Its subcellular location is the secreted. Anti-inflammatory scavenger of eicosanoids and antithrombotic protein that inhibits platelets aggregation induced by collagen, ADP and convulxin (GPVI agonist). Exhibits high affinity binding for glycoprotein IIb-IIIa receptor (ITGA2B/ITGB3) and endothelial cell alphaVbeta3 (ITGAV/ITGB3) integrins, but not for alpha-5/beta-1 or alpha-2/beta-1. Accordingly, it blocks endothelial cell adhesion to vitronectin (IC(50)~1 nM) and marginally to fibronectin (IC(50)~1 uM), but not to collagen. It also inhibits fibroblast growth factor (FGF)-induced endothelial cell proliferation, and attenuates tube formation in vitro. In addition, it dose-dependently attenuates thrombus formation to collagen under flow. Also binds proinflammatory cysteinyl leukotrienes (leukotrienes C4 (LTC4), D4 (LTD4) and E4 (LTE4)) with submicromolar affinities. In Tabanus yao (Horsefly), this protein is Tablysin 15.